The following is a 455-amino-acid chain: Ribulose bisphosphate carboxylase large chain (455 aa).

An N6,N6,N6-trimethyllysine modification is found at lysine 5. Positions 114 and 164 each coordinate substrate. Lysine 166 serves as the catalytic Proton acceptor. Position 168 (lysine 168) interacts with substrate. The Mg(2+) site is built by lysine 192, aspartate 194, and glutamate 195. Lysine 192 carries the N6-carboxylysine modification. Residue histidine 285 is the Proton acceptor of the active site. Substrate is bound by residues arginine 286, histidine 318, and serine 370.

This sequence belongs to the RuBisCO large chain family. Type I subfamily. In terms of assembly, heterohexadecamer of 8 large chains and 8 small chains; disulfide-linked. The disulfide link is formed within the large subunit homodimers. It depends on Mg(2+) as a cofactor. The disulfide bond which can form in the large chain dimeric partners within the hexadecamer appears to be associated with oxidative stress and protein turnover.

Its subcellular location is the plastid. It localises to the chloroplast. The catalysed reaction is 2 (2R)-3-phosphoglycerate + 2 H(+) = D-ribulose 1,5-bisphosphate + CO2 + H2O. It carries out the reaction D-ribulose 1,5-bisphosphate + O2 = 2-phosphoglycolate + (2R)-3-phosphoglycerate + 2 H(+). In terms of biological role, ruBisCO catalyzes two reactions: the carboxylation of D-ribulose 1,5-bisphosphate, the primary event in carbon dioxide fixation, as well as the oxidative fragmentation of the pentose substrate in the photorespiration process. Both reactions occur simultaneously and in competition at the same active site. The sequence is that of Ribulose bisphosphate carboxylase large chain from Brownea coccinea (Rose of Venezuela).